We begin with the raw amino-acid sequence, 426 residues long: Glutamate-1-semialdehyde 2,1-aminomutase (426 aa).

Lysine 265 carries the post-translational modification N6-(pyridoxal phosphate)lysine.

It belongs to the class-III pyridoxal-phosphate-dependent aminotransferase family. HemL subfamily. Homodimer. Requires pyridoxal 5'-phosphate as cofactor.

The protein localises to the cytoplasm. It carries out the reaction (S)-4-amino-5-oxopentanoate = 5-aminolevulinate. The protein operates within porphyrin-containing compound metabolism; protoporphyrin-IX biosynthesis; 5-aminolevulinate from L-glutamyl-tRNA(Glu): step 2/2. The sequence is that of Glutamate-1-semialdehyde 2,1-aminomutase from Escherichia coli O81 (strain ED1a).